Here is a 438-residue protein sequence, read N- to C-terminus: Aspartate--tRNA(Asp) ligase (438 aa).

Glu-170 contributes to the L-aspartate binding site. An aspartate region spans residues 192-195; sequence QLYK. Arg-214 is a binding site for L-aspartate. ATP-binding positions include 214–216, 222–224, and Glu-361; these read RAE and RHL. Positions 361 and 364 each coordinate Mg(2+). Residues Ser-364 and Arg-368 each contribute to the L-aspartate site. Residue 409–412 participates in ATP binding; it reads GAER.

This sequence belongs to the class-II aminoacyl-tRNA synthetase family. Type 2 subfamily. Homodimer. Mg(2+) is required as a cofactor.

It is found in the cytoplasm. It carries out the reaction tRNA(Asp) + L-aspartate + ATP = L-aspartyl-tRNA(Asp) + AMP + diphosphate. Catalyzes the attachment of L-aspartate to tRNA(Asp) in a two-step reaction: L-aspartate is first activated by ATP to form Asp-AMP and then transferred to the acceptor end of tRNA(Asp). This Pyrococcus horikoshii (strain ATCC 700860 / DSM 12428 / JCM 9974 / NBRC 100139 / OT-3) protein is Aspartate--tRNA(Asp) ligase.